A 64-amino-acid polypeptide reads, in one-letter code: Translational regulator CsrA (64 aa).

It belongs to the CsrA/RsmA family. Homodimer; the beta-strands of each monomer intercalate to form a hydrophobic core, while the alpha-helices form wings that extend away from the core.

The protein localises to the cytoplasm. A key translational regulator that binds mRNA to regulate translation initiation and/or mRNA stability. Mediates global changes in gene expression, shifting from rapid growth to stress survival by linking envelope stress, the stringent response and the catabolite repression systems. Usually binds in the 5'-UTR; binding at or near the Shine-Dalgarno sequence prevents ribosome-binding, repressing translation, binding elsewhere in the 5'-UTR can activate translation and/or stabilize the mRNA. Its function is antagonized by small RNA(s). This Actinobacillus pleuropneumoniae serotype 5b (strain L20) protein is Translational regulator CsrA.